The primary structure comprises 628 residues: 69 kDa protein (628 aa).

3 disordered regions span residues 1–24 (MSNGLPISIGRPCTHDSQRSLSAS), 141–492 (HFHA…SDPV), and 537–628 (VLPT…PDTD). Composition is skewed to polar residues over residues 166–178 (RTSVRQPRSTTRG) and 295–305 (TGHIPSTTASR). Positions 433–451 (EGPPPPPRRLPSPATPPQS) are enriched in pro residues. The span at 586-596 (PSGPLRSQSPS) shows a compositional bias: polar residues.

It belongs to the tymoviridae protein p69 family.

Acts as a suppressor of RNA-mediated gene silencing, also known as post-transcriptional gene silencing (PTGS), a mechanism of plant viral defense that limits the accumulation of viral RNAs. In Turnip yellow mosaic virus (isolate Australia), this protein is 69 kDa protein.